We begin with the raw amino-acid sequence, 152 residues long: Ribosome maturation factor RimP (152 aa).

Belongs to the RimP family.

It is found in the cytoplasm. Functionally, required for maturation of 30S ribosomal subunits. The polypeptide is Ribosome maturation factor RimP (Pectobacterium atrosepticum (strain SCRI 1043 / ATCC BAA-672) (Erwinia carotovora subsp. atroseptica)).